The sequence spans 517 residues: MIEFLIGLIAAVVGILVGYLIARKINNANYEIFLEQAKAKAKAIEFEAEGILRNSKISVQEAEFEAKKAYEDKALKLQKDYNAKFDEISKKEQTVLTEQEILKDSREELEKEKKSAQTIYDEGTSLKKTYETKVEESLKLLERVAGLTEDEAKSEILQKVEEKSRAEIAHIVRKYEEEAKKEAKRNANYILAQATTRYAGEYAAERLINVVNIKNDDLKGRIIGKDGRNIKTLEMISGVDVIIDDTPNAIILSSHNLYRRAIAVRTVELLVEDGRIQPARIEDVYKKVSEEFEAGIQEEGENIVMDLGLTKIHPEIVKLIGKLKFRASYGQNALIHSLEVAHLAGIIAAETGGDENLARRAGILHDIGKALTHEFEGSHVDLGAEICKRYKENPVVINAIYAHHGHEEPTSVESAAVCTADVLSAARPGARREVLEAFLKRVSEIENIATSKEGVKQAYAINAGREIRVIANAKLVNDDEAVLLAKEIAEEIQAKVQYPGEIKVNIIRETRAVDYAK.

A helical transmembrane segment spans residues 1–21 (MIEFLIGLIAAVVGILVGYLI). In terms of domain architecture, KH spans 207-271 (LINVVNIKND…IAVRTVELLV (65 aa)). The region spanning 333–426 (ALIHSLEVAH…VCTADVLSAA (94 aa)) is the HD domain.

This sequence belongs to the RNase Y family.

It is found in the cell membrane. In terms of biological role, endoribonuclease that initiates mRNA decay. The polypeptide is Ribonuclease Y (Campylobacter hominis (strain ATCC BAA-381 / DSM 21671 / CCUG 45161 / LMG 19568 / NCTC 13146 / CH001A)).